Here is a 405-residue protein sequence, read N- to C-terminus: tRNA-specific 2-thiouridylase MnmA (405 aa).

Residues A41–S48 and L67 contribute to the ATP site. The active-site Nucleophile is the C135. Cysteines 135 and 231 form a disulfide. G159 is an ATP binding site. The segment at K181–Q183 is interaction with tRNA. The active-site Cysteine persulfide intermediate is the C231.

It belongs to the MnmA/TRMU family.

The protein localises to the cytoplasm. The catalysed reaction is S-sulfanyl-L-cysteinyl-[protein] + uridine(34) in tRNA + AH2 + ATP = 2-thiouridine(34) in tRNA + L-cysteinyl-[protein] + A + AMP + diphosphate + H(+). Its function is as follows. Catalyzes the 2-thiolation of uridine at the wobble position (U34) of tRNA, leading to the formation of s(2)U34. In Maricaulis maris (strain MCS10) (Caulobacter maris), this protein is tRNA-specific 2-thiouridylase MnmA.